Consider the following 244-residue polypeptide: Carbonyl reductase [NADPH] 2 (244 aa).

11–39 lines the NADP(+) pocket; the sequence is LVTGAGKGIGRDTVKALHVSGARVVAVTR. Substrate is bound at residue serine 136. Tyrosine 149 (proton acceptor) is an active-site residue. Residue serine 176 is modified to Phosphoserine.

Belongs to the short-chain dehydrogenases/reductases (SDR) family. In terms of assembly, homotetramer. In terms of tissue distribution, lung (ciliated cells, non-ciliated bronchiolar cells and type-II alveolar pneumocytes). Low expression in all extrapulmonary tissues, including adipose tissue.

It is found in the mitochondrion matrix. It catalyses the reaction a secondary alcohol + NADP(+) = a ketone + NADPH + H(+). With respect to regulation, allosteric enzyme exhibiting negative cooperativity. Activated 2-5 fold by fatty acids. In terms of biological role, may function in the pulmonary metabolism of endogenous carbonyl compounds, such as aliphatic aldehydes and ketones derived from lipid peroxidation, 3-ketosteroids and fatty aldehydes, as well as in xenobiotic metabolism. This is Carbonyl reductase [NADPH] 2 (CBR2) from Sus scrofa (Pig).